The chain runs to 343 residues: Small ribosomal subunit biogenesis GTPase RsgA (343 aa).

One can recognise a CP-type G domain in the interval 116–275 (HGQLKPVAAN…LIDSPGIREF (160 aa)). GTP contacts are provided by residues 163–166 (NKAD) and 217–225 (GQSGVGKSS). Positions 299, 304, 306, and 312 each coordinate Zn(2+).

This sequence belongs to the TRAFAC class YlqF/YawG GTPase family. RsgA subfamily. As to quaternary structure, monomer. Associates with 30S ribosomal subunit, binds 16S rRNA. Zn(2+) is required as a cofactor.

It is found in the cytoplasm. In terms of biological role, one of several proteins that assist in the late maturation steps of the functional core of the 30S ribosomal subunit. Helps release RbfA from mature subunits. May play a role in the assembly of ribosomal proteins into the subunit. Circularly permuted GTPase that catalyzes slow GTP hydrolysis, GTPase activity is stimulated by the 30S ribosomal subunit. The polypeptide is Small ribosomal subunit biogenesis GTPase RsgA (Pseudomonas putida (strain ATCC 700007 / DSM 6899 / JCM 31910 / BCRC 17059 / LMG 24140 / F1)).